A 279-amino-acid polypeptide reads, in one-letter code: Alcohol dehydrogenase-related 31 kDa protein (279 aa).

11–34 contributes to the NAD(+) binding site; it reads YVADCGGIALETSKVLMTKNIAKL. Ser139 contacts substrate. The active-site Proton acceptor is Tyr152.

The protein belongs to the short-chain dehydrogenases/reductases (SDR) family.

The protein is Alcohol dehydrogenase-related 31 kDa protein (Adhr) of Drosophila madeirensis (Fruit fly).